Here is a 188-residue protein sequence, read N- to C-terminus: UPF0301 protein azo3459 (188 aa).

It belongs to the UPF0301 (AlgH) family.

The chain is UPF0301 protein azo3459 from Azoarcus sp. (strain BH72).